The sequence spans 533 residues: Probable nucleolar protein 5-2 (533 aa).

The Nop domain occupies 281–399 (IAPNLTALVG…LEARLRNLEG (119 aa)). Disordered regions lie at residues 401–433 (DLGRLSGSSKGKPKIEVYNKDKKMGSGGLITPA) and 445–533 (GETS…KSKD). A compositionally biased stretch (basic and acidic residues) spans 413-424 (PKIEVYNKDKKM). The span at 521–533 (KKDKKEKKKKSKD) shows a compositional bias: basic residues.

The protein belongs to the NOP5/NOP56 family.

The protein localises to the nucleus. It is found in the nucleolus. Functionally, required for 60S ribosomal subunit biogenesis. The polypeptide is Probable nucleolar protein 5-2 (NOP5-2) (Arabidopsis thaliana (Mouse-ear cress)).